We begin with the raw amino-acid sequence, 524 residues long: Bifunctional purine biosynthesis protein PurH (524 aa).

Residues 1–149 form the MGS-like domain; it reads MSDPVIKRAL…KNNESVTVVT (149 aa).

The protein belongs to the PurH family.

The catalysed reaction is (6R)-10-formyltetrahydrofolate + 5-amino-1-(5-phospho-beta-D-ribosyl)imidazole-4-carboxamide = 5-formamido-1-(5-phospho-D-ribosyl)imidazole-4-carboxamide + (6S)-5,6,7,8-tetrahydrofolate. The enzyme catalyses IMP + H2O = 5-formamido-1-(5-phospho-D-ribosyl)imidazole-4-carboxamide. The protein operates within purine metabolism; IMP biosynthesis via de novo pathway; 5-formamido-1-(5-phospho-D-ribosyl)imidazole-4-carboxamide from 5-amino-1-(5-phospho-D-ribosyl)imidazole-4-carboxamide (10-formyl THF route): step 1/1. It functions in the pathway purine metabolism; IMP biosynthesis via de novo pathway; IMP from 5-formamido-1-(5-phospho-D-ribosyl)imidazole-4-carboxamide: step 1/1. This is Bifunctional purine biosynthesis protein PurH from Chlorobium chlorochromatii (strain CaD3).